A 334-amino-acid chain; its full sequence is Glycerol-3-phosphate dehydrogenase [NAD(P)+] (334 aa).

Ser14, Tyr15, His35, and Lys109 together coordinate NADPH. Residues Lys109, Gly138, and Thr140 each contribute to the sn-glycerol 3-phosphate site. Ala142 lines the NADPH pocket. Residues Lys194, Asp247, Ser257, Arg258, and Asn259 each contribute to the sn-glycerol 3-phosphate site. Lys194 (proton acceptor) is an active-site residue. Arg258 provides a ligand contact to NADPH. Positions 282 and 284 each coordinate NADPH.

The protein belongs to the NAD-dependent glycerol-3-phosphate dehydrogenase family.

The protein localises to the cytoplasm. It catalyses the reaction sn-glycerol 3-phosphate + NAD(+) = dihydroxyacetone phosphate + NADH + H(+). It carries out the reaction sn-glycerol 3-phosphate + NADP(+) = dihydroxyacetone phosphate + NADPH + H(+). It functions in the pathway membrane lipid metabolism; glycerophospholipid metabolism. Catalyzes the reduction of the glycolytic intermediate dihydroxyacetone phosphate (DHAP) to sn-glycerol 3-phosphate (G3P), the key precursor for phospholipid synthesis. The chain is Glycerol-3-phosphate dehydrogenase [NAD(P)+] from Aeromonas hydrophila subsp. hydrophila (strain ATCC 7966 / DSM 30187 / BCRC 13018 / CCUG 14551 / JCM 1027 / KCTC 2358 / NCIMB 9240 / NCTC 8049).